The chain runs to 220 residues: Putative threonylcarbamoyl-AMP synthase (220 aa).

The region spanning 17 to 202 (ARGIASAVAA…TPRILRAGPV (186 aa)) is the YrdC-like domain.

The protein belongs to the SUA5 family.

Its subcellular location is the cytoplasm. It catalyses the reaction L-threonine + hydrogencarbonate + ATP = L-threonylcarbamoyladenylate + diphosphate + H2O. In terms of biological role, required for the formation of a threonylcarbamoyl group on adenosine at position 37 (t(6)A37) in tRNAs that read codons beginning with adenine. Catalyzes the conversion of L-threonine, HCO(3)(-)/CO(2) and ATP to give threonylcarbamoyl-AMP (TC-AMP) as the acyladenylate intermediate, with the release of diphosphate. In Mycobacterium leprae (strain TN), this protein is Putative threonylcarbamoyl-AMP synthase.